A 333-amino-acid chain; its full sequence is Structure-specific endonuclease subunit SLX1 homolog (333 aa).

The region spanning 68–157 is the GIY-YIG domain; that stretch reads DFFGVYCLLS…KSRRLRLLNL (90 aa). An SLX1-type zinc finger spans residues 237–293; it reads CSLCLKPILSISELLRCHANETCKSHFHMRCLSKHALNAVDEYRTSLFPIQGQCPKC.

The protein belongs to the SLX1 family. Forms a heterodimer with a member of the SLX4 family. It depends on a divalent metal cation as a cofactor.

Its subcellular location is the nucleus. Its function is as follows. Catalytic subunit of a heterodimeric structure-specific endonuclease that resolves DNA secondary structures generated during DNA repair and recombination. Has endonuclease activity towards branched DNA substrates, introducing single-strand cuts in duplex DNA close to junctions with ss-DNA. The protein is Structure-specific endonuclease subunit SLX1 homolog of Brugia malayi (Filarial nematode worm).